The primary structure comprises 393 residues: Chorismate synthase (393 aa).

Residues R40 and R46 each contribute to the NADP(+) site. FMN is bound by residues 129–131 (RSS), 249–250 (QA), G301, 316–320 (KPIPT), and R342.

It belongs to the chorismate synthase family. As to quaternary structure, homotetramer. It depends on FMNH2 as a cofactor.

The catalysed reaction is 5-O-(1-carboxyvinyl)-3-phosphoshikimate = chorismate + phosphate. It functions in the pathway metabolic intermediate biosynthesis; chorismate biosynthesis; chorismate from D-erythrose 4-phosphate and phosphoenolpyruvate: step 7/7. In terms of biological role, catalyzes the anti-1,4-elimination of the C-3 phosphate and the C-6 proR hydrogen from 5-enolpyruvylshikimate-3-phosphate (EPSP) to yield chorismate, which is the branch point compound that serves as the starting substrate for the three terminal pathways of aromatic amino acid biosynthesis. This reaction introduces a second double bond into the aromatic ring system. The protein is Chorismate synthase of Geotalea uraniireducens (strain Rf4) (Geobacter uraniireducens).